The following is a 505-amino-acid chain: Annexin A11 (505 aa).

Pro residues-rich tracts occupy residues 1-17 and 99-160; these read MSYP…PPAA and PVPP…PVPL. Disordered regions lie at residues 1-38 and 84-199; these read MSYP…PPIG and PVPP…DAPG. The segment covering 161 to 177 has biased composition (low complexity); the sequence is PGQQQPVPSYPGYPGSG. Annexin repeat units follow at residues 200-271, 272-343, 355-427, and 431-502; these read FDPL…ALMK, TPVL…SLSQ, SLAQ…AVVK, and NTPA…KICG. Residues Lys-248 and Lys-255 each carry the N6-acetyllysine modification. Lys-479 carries the post-translational modification N6-acetyllysine.

The protein belongs to the annexin family. Interacts with S100A6. Interacts with PDCD6 in a calcium-dependent manner. Interacts with KIF23 during cytokinesis.

The protein resides in the cytoplasm. Its subcellular location is the melanosome. The protein localises to the nucleus envelope. It is found in the nucleus. It localises to the nucleoplasm. The protein resides in the cytoskeleton. Its subcellular location is the spindle. Functionally, binds specifically to calcyclin in a calcium-dependent manner. Required for midbody formation and completion of the terminal phase of cytokinesis. This is Annexin A11 (ANXA11) from Homo sapiens (Human).